The chain runs to 342 residues: MKIKVGILGASGYAGNELVRILLNHPKVEISYLGSSSSVGQNYQDLYPNTPLNLCFENKNLDELELDLLFLATPHKFSAKLLNENLLKKMKIIDLSADFRLKNPKDYELWYKFTHPNQELLQNAVYGLCELYKEEIKKASLVANPGCYTTCSILSLYPLFKEKIIDFSSVIIDAKSGVSGAGRSAKVENLFCEVNENIKAYNLALHRHTPEIEEHLSYAAKEKITLQFTPHLVPMQRGILISAYANLKEDLQEQDIRDIYTKYYQNNKFIRLLPPQSLPQTRWVKSSNFADINFSVDQRTKRVIVLGAIDNLIKGAAGQAVQNMNLMFDFDEDEGLKFFANL.

The active site involves Cys147.

The protein belongs to the NAGSA dehydrogenase family. Type 1 subfamily.

It is found in the cytoplasm. The enzyme catalyses N-acetyl-L-glutamate 5-semialdehyde + phosphate + NADP(+) = N-acetyl-L-glutamyl 5-phosphate + NADPH + H(+). Its pathway is amino-acid biosynthesis; L-arginine biosynthesis; N(2)-acetyl-L-ornithine from L-glutamate: step 3/4. Catalyzes the NADPH-dependent reduction of N-acetyl-5-glutamyl phosphate to yield N-acetyl-L-glutamate 5-semialdehyde. The chain is N-acetyl-gamma-glutamyl-phosphate reductase from Campylobacter jejuni subsp. jejuni serotype O:2 (strain ATCC 700819 / NCTC 11168).